A 227-amino-acid polypeptide reads, in one-letter code: UPF0758 protein CPF_2399 (227 aa).

In terms of domain architecture, MPN spans K105–L227. H176, H178, and D189 together coordinate Zn(2+). Positions H176–D189 match the JAMM motif motif.

This sequence belongs to the UPF0758 family.

This Clostridium perfringens (strain ATCC 13124 / DSM 756 / JCM 1290 / NCIMB 6125 / NCTC 8237 / Type A) protein is UPF0758 protein CPF_2399.